Consider the following 586-residue polypeptide: Glutamine--tRNA ligase (586 aa).

The 'HIGH' region motif lies at 58 to 68 (PEPNGYLHIGH). Residues 59-61 (EPN) and 65-71 (HIGHAKS) contribute to the ATP site. 2 residues coordinate L-glutamine: aspartate 91 and tyrosine 240. ATP is bound by residues threonine 259 and 294–295 (RL). The short motif at 301–305 (VTSKR) is the 'KMSKS' region element.

Belongs to the class-I aminoacyl-tRNA synthetase family. Monomer.

It localises to the cytoplasm. The catalysed reaction is tRNA(Gln) + L-glutamine + ATP = L-glutaminyl-tRNA(Gln) + AMP + diphosphate. This Bordetella avium (strain 197N) protein is Glutamine--tRNA ligase.